A 194-amino-acid chain; its full sequence is uncharacterized protein (194 aa).

This is an uncharacterized protein from Methanocaldococcus jannaschii (strain ATCC 43067 / DSM 2661 / JAL-1 / JCM 10045 / NBRC 100440) (Methanococcus jannaschii).